Here is a 1097-residue protein sequence, read N- to C-terminus: DNA-directed RNA polymerase subunit beta (1097 aa).

Residues 1072–1097 (QDVNPRRSTPSRPTYESLGVADYDED) are disordered.

Belongs to the RNA polymerase beta chain family. In terms of assembly, in cyanobacteria the RNAP catalytic core is composed of 2 alpha, 1 beta, 1 beta', 1 gamma and 1 omega subunit. When a sigma factor is associated with the core the holoenzyme is formed, which can initiate transcription.

It carries out the reaction RNA(n) + a ribonucleoside 5'-triphosphate = RNA(n+1) + diphosphate. In terms of biological role, DNA-dependent RNA polymerase catalyzes the transcription of DNA into RNA using the four ribonucleoside triphosphates as substrates. This is DNA-directed RNA polymerase subunit beta from Prochlorococcus marinus (strain MIT 9303).